Consider the following 527-residue polypeptide: Peptide chain release factor 3 (527 aa).

The region spanning 9–278 (NKRRTFAIIS…GLTQWAPKPQ (270 aa)) is the tr-type G domain. GTP contacts are provided by residues 18–25 (SHPDAGKT), 86–90 (DTPGH), and 140–143 (NKLD).

The protein belongs to the TRAFAC class translation factor GTPase superfamily. Classic translation factor GTPase family. PrfC subfamily.

Its subcellular location is the cytoplasm. In terms of biological role, increases the formation of ribosomal termination complexes and stimulates activities of RF-1 and RF-2. It binds guanine nucleotides and has strong preference for UGA stop codons. It may interact directly with the ribosome. The stimulation of RF-1 and RF-2 is significantly reduced by GTP and GDP, but not by GMP. This is Peptide chain release factor 3 from Haemophilus influenzae (strain PittEE).